Reading from the N-terminus, the 96-residue chain is Glutamyl-tRNA(Gln) amidotransferase subunit C (96 aa).

This sequence belongs to the GatC family. Heterotrimer of A, B and C subunits.

The catalysed reaction is L-glutamyl-tRNA(Gln) + L-glutamine + ATP + H2O = L-glutaminyl-tRNA(Gln) + L-glutamate + ADP + phosphate + H(+). The enzyme catalyses L-aspartyl-tRNA(Asn) + L-glutamine + ATP + H2O = L-asparaginyl-tRNA(Asn) + L-glutamate + ADP + phosphate + 2 H(+). Its function is as follows. Allows the formation of correctly charged Asn-tRNA(Asn) or Gln-tRNA(Gln) through the transamidation of misacylated Asp-tRNA(Asn) or Glu-tRNA(Gln) in organisms which lack either or both of asparaginyl-tRNA or glutaminyl-tRNA synthetases. The reaction takes place in the presence of glutamine and ATP through an activated phospho-Asp-tRNA(Asn) or phospho-Glu-tRNA(Gln). This is Glutamyl-tRNA(Gln) amidotransferase subunit C from Neisseria meningitidis serogroup A / serotype 4A (strain DSM 15465 / Z2491).